The following is a 154-amino-acid chain: uncharacterized protein (154 aa).

A disordered region spans residues 104 to 124 (NNNNNDNDNNNKEKEDNDEKE). Over residues 112-124 (NNNKEKEDNDEKE) the composition is skewed to basic and acidic residues.

This is an uncharacterized protein from Dictyostelium discoideum (Social amoeba).